Here is a 290-residue protein sequence, read N- to C-terminus: N-acetylneuraminate lyase (290 aa).

Aceneuramate contacts are provided by S44 and T45. The active-site Proton donor is the Y133. The active-site Schiff-base intermediate with substrate is the K161. Aceneuramate contacts are provided by T163, G185, D187, E188, and S204.

Belongs to the DapA family. NanA subfamily. As to quaternary structure, homotetramer.

It is found in the cytoplasm. It carries out the reaction aceneuramate = aldehydo-N-acetyl-D-mannosamine + pyruvate. The protein operates within amino-sugar metabolism; N-acetylneuraminate degradation; D-fructose 6-phosphate from N-acetylneuraminate: step 1/5. Its function is as follows. Catalyzes the reversible aldol cleavage of N-acetylneuraminic acid (sialic acid; Neu5Ac) to form pyruvate and N-acetylmannosamine (ManNAc) via a Schiff base intermediate. The polypeptide is N-acetylneuraminate lyase (Fusobacterium nucleatum subsp. nucleatum (strain ATCC 25586 / DSM 15643 / BCRC 10681 / CIP 101130 / JCM 8532 / KCTC 2640 / LMG 13131 / VPI 4355)).